The primary structure comprises 324 residues: Glyoxylate/hydroxypyruvate reductase B (324 aa).

Residues Arg237 and Glu266 contribute to the active site. The active-site Proton donor is the His285.

The protein belongs to the D-isomer specific 2-hydroxyacid dehydrogenase family. GhrB subfamily. As to quaternary structure, homodimer.

The protein resides in the cytoplasm. The enzyme catalyses glycolate + NADP(+) = glyoxylate + NADPH + H(+). It carries out the reaction (R)-glycerate + NAD(+) = 3-hydroxypyruvate + NADH + H(+). The catalysed reaction is (R)-glycerate + NADP(+) = 3-hydroxypyruvate + NADPH + H(+). Its function is as follows. Catalyzes the NADPH-dependent reduction of glyoxylate and hydroxypyruvate into glycolate and glycerate, respectively. This is Glyoxylate/hydroxypyruvate reductase B from Escherichia coli O6:K15:H31 (strain 536 / UPEC).